Reading from the N-terminus, the 472-residue chain is GTPase Der (472 aa).

EngA-type G domains follow at residues 3 to 166 (PVIA…PEQE) and 176 to 349 (IRIG…DSAM). GTP-binding positions include 9 to 16 (GRPNVGKS), 56 to 60 (DTGGI), 118 to 121 (NKID), 182 to 189 (GRPNVGKS), 229 to 233 (DTAGV), and 294 to 297 (NKWD). One can recognise a KH-like domain in the interval 350-434 (AKWSTNQLTT…PIRFEFRSGE (85 aa)). A disordered region spans residues 433–472 (GENPFAGKKNKLSPRQQKKKERLMKHVKKLKHKQKRKKSR). Basic residues predominate over residues 440–472 (KKNKLSPRQQKKKERLMKHVKKLKHKQKRKKSR).

This sequence belongs to the TRAFAC class TrmE-Era-EngA-EngB-Septin-like GTPase superfamily. EngA (Der) GTPase family. Associates with the 50S ribosomal subunit.

Functionally, GTPase that plays an essential role in the late steps of ribosome biogenesis. The sequence is that of GTPase Der from Hahella chejuensis (strain KCTC 2396).